The sequence spans 529 residues: Tyrosinase (529 aa).

The signal sequence occupies residues 1-18 (MFLFAMGLLLVILQPSTG). Over 19 to 476 (QFPRVCANTQ…YLKQAHQIWP (458 aa)) the chain is Lumenal, melanosome. Residues Asn86, Asn111, and Asn161 are each glycosylated (N-linked (GlcNAc...) asparagine). Positions 180, 202, and 211 each coordinate Cu cation. Asn230 and Asn290 each carry an N-linked (GlcNAc...) asparagine glycan. The interval 293-313 (SEGPILRNPGNNDKSRTPRLP) is disordered. N-linked (GlcNAc...) asparagine glycans are attached at residues Asn337 and Asn356. Positions 363 and 367 each coordinate Cu cation. Asn371 is a glycosylation site (N-linked (GlcNAc...) asparagine). Cu cation is bound at residue His390. Residues 477-497 (WLVGAAVIGGIITAVLSGLIL) traverse the membrane as a helical segment. The Cytoplasmic portion of the chain corresponds to 498–529 (ACRKKRKGTSPEIQPLLTESEDYNNVSYQSHF).

This sequence belongs to the tyrosinase family. Cu(2+) is required as a cofactor.

It is found in the melanosome membrane. It localises to the melanosome. It carries out the reaction 2 L-dopa + O2 = 2 L-dopaquinone + 2 H2O. The catalysed reaction is L-tyrosine + O2 = L-dopaquinone + H2O. In terms of biological role, this is a copper-containing oxidase that functions in the formation of pigments such as melanins and other polyphenolic compounds. Catalyzes the initial and rate limiting step in the cascade of reactions leading to melanin production from tyrosine. In addition to hydroxylating tyrosine to DOPA (3,4-dihydroxyphenylalanine), also catalyzes the oxidation of DOPA to DOPA-quinone, and possibly the oxidation of DHI (5,6-dihydroxyindole) to indole-5,6 quinone. The protein is Tyrosinase (TYR) of Gallus gallus (Chicken).